A 207-amino-acid polypeptide reads, in one-letter code: Large ribosomal subunit protein uL4 (207 aa).

Residues 49–78 (HAVKNRSAVSGGGRKPWRQKGTGRARQGSI) form a disordered region.

This sequence belongs to the universal ribosomal protein uL4 family. As to quaternary structure, part of the 50S ribosomal subunit.

Its function is as follows. One of the primary rRNA binding proteins, this protein initially binds near the 5'-end of the 23S rRNA. It is important during the early stages of 50S assembly. It makes multiple contacts with different domains of the 23S rRNA in the assembled 50S subunit and ribosome. In terms of biological role, forms part of the polypeptide exit tunnel. The protein is Large ribosomal subunit protein uL4 of Streptococcus suis (strain 98HAH33).